Here is a 187-residue protein sequence, read N- to C-terminus: MSNTAYIDTCYGPVADDVIQRAANIRLLICDVDGVMSDGLIYMGNQGEELKAFNVRDGYGIRCLITSDIDVAIITGRRAKLLEDRANTLGITHLYQGQSDKLVAYHELLATLQCQPEQVAYIGDDLIDWPVMAQVGLSVAVADAHPLLLPKAHYVTRIKGGRGAVREVCDLILLAQDKLEGATGLSI.

Aspartate 31 and aspartate 33 together coordinate Mg(2+). Substrate contacts are provided by residues aspartate 33, 54–58 (NVRDG), arginine 62, arginine 77, arginine 85, and lysine 101. Aspartate 124 is a Mg(2+) binding site.

The protein belongs to the KdsC family. In terms of assembly, homotetramer. Mg(2+) is required as a cofactor.

It catalyses the reaction 3-deoxy-alpha-D-manno-2-octulosonate-8-phosphate + H2O = 3-deoxy-alpha-D-manno-oct-2-ulosonate + phosphate. The protein operates within carbohydrate biosynthesis; 3-deoxy-D-manno-octulosonate biosynthesis; 3-deoxy-D-manno-octulosonate from D-ribulose 5-phosphate: step 3/3. It functions in the pathway bacterial outer membrane biogenesis; lipopolysaccharide biosynthesis. Its function is as follows. Catalyzes the hydrolysis of 3-deoxy-D-manno-octulosonate 8-phosphate (KDO 8-P) to 3-deoxy-D-manno-octulosonate (KDO) and inorganic phosphate. The sequence is that of 3-deoxy-D-manno-octulosonate 8-phosphate phosphatase KdsC (kdsC) from Yersinia pestis.